The primary structure comprises 61 residues: MFTLKKTLLLLFFLGTINLSLCEEERNAEEERRDGDDEMDVEVKKRFITGLIGGLMKALGK.

The N-terminal stretch at 1 to 22 (MFTLKKTLLLLFFLGTINLSLC) is a signal peptide. Positions 23–44 (EEERNAEEERRDGDDEMDVEVK) are cleaved as a propeptide — removed in mature form. Residue K61 is modified to Lysine amide.

This sequence belongs to the frog skin active peptide (FSAP) family. Temporin subfamily. Expressed by the skin glands.

The protein resides in the secreted. Functionally, antimicrobial peptide. Active against some Gram-positive and Gram-negative bacterial strains. Active against fungus C.glabrata 090902 but not against C.albicans ATCC 12231. Shows very weak hemolytic activity against human erythrocytes. In Sylvirana spinulosa (Fine-spined frog), this protein is Temporin-SN2.